We begin with the raw amino-acid sequence, 57 residues long: Large ribosomal subunit protein bL32 (57 aa).

Belongs to the bacterial ribosomal protein bL32 family.

This is Large ribosomal subunit protein bL32 from Streptomyces griseus subsp. griseus (strain JCM 4626 / CBS 651.72 / NBRC 13350 / KCC S-0626 / ISP 5235).